The primary structure comprises 217 residues: Adenylate kinase (217 aa).

10-15 lines the ATP pocket; it reads GAGKGT. An NMP region spans residues 30–59; sequence STGDMFRAAMKEGTPLGLQAKQYMDRGDLV. Residues threonine 31, arginine 36, 57 to 59, 85 to 88, and glutamine 92 contribute to the AMP site; these read DLV and GFPR. The tract at residues 126 to 163 is LID; it reads GRRICRNCGATYHLIFHPPAKPGVCDKCGGELYQRADD. An ATP-binding site is contributed by arginine 127. Zn(2+) contacts are provided by cysteine 130 and cysteine 133. 136-137 contacts ATP; the sequence is TY. 2 residues coordinate Zn(2+): cysteine 150 and cysteine 153. Arginine 160 and arginine 171 together coordinate AMP. Glutamine 199 is a binding site for ATP.

Belongs to the adenylate kinase family. As to quaternary structure, monomer.

The protein localises to the cytoplasm. The catalysed reaction is AMP + ATP = 2 ADP. The protein operates within purine metabolism; AMP biosynthesis via salvage pathway; AMP from ADP: step 1/1. Functionally, catalyzes the reversible transfer of the terminal phosphate group between ATP and AMP. Plays an important role in cellular energy homeostasis and in adenine nucleotide metabolism. The protein is Adenylate kinase of Geobacillus stearothermophilus (Bacillus stearothermophilus).